The chain runs to 285 residues: NAD kinase (285 aa).

Catalysis depends on aspartate 64, which acts as the Proton acceptor. NAD(+) is bound by residues 64–65 (DG), 140–141 (ND), arginine 151, arginine 168, aspartate 170, and 181–186 (TGYNLS).

This sequence belongs to the NAD kinase family. It depends on a divalent metal cation as a cofactor.

Its subcellular location is the cytoplasm. The catalysed reaction is NAD(+) + ATP = ADP + NADP(+) + H(+). Its function is as follows. Involved in the regulation of the intracellular balance of NAD and NADP, and is a key enzyme in the biosynthesis of NADP. Catalyzes specifically the phosphorylation on 2'-hydroxyl of the adenosine moiety of NAD to yield NADP. The protein is NAD kinase of Lachnoclostridium phytofermentans (strain ATCC 700394 / DSM 18823 / ISDg) (Clostridium phytofermentans).